Reading from the N-terminus, the 264-residue chain is NAD kinase 1 (264 aa).

D45 functions as the Proton acceptor in the catalytic mechanism. NAD(+) is bound by residues 45–46, G46, 122–123, R148, D150, S158, 161–166, and H223; these read DG, NE, and TAYNKS.

The protein belongs to the NAD kinase family. As to quaternary structure, homotetramer. A divalent metal cation serves as cofactor.

Its subcellular location is the cytoplasm. It catalyses the reaction NAD(+) + ATP = ADP + NADP(+) + H(+). Its activity is regulated as follows. Competitively inhibited by 5'-thioacetyladenosine (TAA) and di-(5'-thioadenosine) (DTA). In terms of biological role, involved in the regulation of the intracellular balance of NAD and NADP, and is a key enzyme in the biosynthesis of NADP. Catalyzes specifically the phosphorylation on 2'-hydroxyl of the adenosine moiety of NAD to yield NADP. The polypeptide is NAD kinase 1 (Listeria monocytogenes serovar 1/2a (strain ATCC BAA-679 / EGD-e)).